A 311-amino-acid chain; its full sequence is Pyrimidine-specific ribonucleoside hydrolase RihA (311 aa).

Residue H240 is part of the active site.

The protein belongs to the IUNH family. RihA subfamily.

Functionally, hydrolyzes cytidine or uridine to ribose and cytosine or uracil, respectively. In Salmonella paratyphi C (strain RKS4594), this protein is Pyrimidine-specific ribonucleoside hydrolase RihA.